Consider the following 564-residue polypeptide: O-fucosyltransferase 6 (564 aa).

Residues 17–37 (LLPFICAVSGALLILFALLSI) traverse the membrane as a helical; Signal-anchor for type II membrane protein segment. 2 N-linked (GlcNAc...) asparagine glycosylation sites follow: Asn95 and Asn139. 277-279 (HLR) provides a ligand contact to substrate. Asn449 carries N-linked (GlcNAc...) asparagine glycosylation. Over residues 501–512 (MDSRKFGKKEQK) the composition is skewed to basic and acidic residues. Positions 501-542 (MDSRKFGKKEQKEDEDAELSSSETDYEEDQTDLQDRGLYNGT) are disordered. Residues 513 to 532 (EDEDAELSSSETDYEEDQTD) show a composition bias toward acidic residues. The N-linked (GlcNAc...) asparagine glycan is linked to Asn540.

Belongs to the glycosyltransferase GT106 family.

It is found in the membrane. The protein operates within glycan metabolism. The chain is O-fucosyltransferase 6 from Arabidopsis thaliana (Mouse-ear cress).